A 1711-amino-acid polypeptide reads, in one-letter code: Hybrid PKS-NRPS synthetase TAS1 (1711 aa).

The interval 43–397 (APLSKMQRAL…RNGLNSEHRV (355 aa)) is condensation (C) domain. The interval 506–907 (QQQATLRPEQ…TVLLYGRINN (402 aa)) is adenylation (A) domain. A Carrier 1 domain is found at 1043–1119 (LEWAAAKARI…SQVGLVQSRR (77 aa)). An O-(pantetheine 4'-phosphoryl)serine modification is found at serine 1079. The segment covering 1114 to 1127 (LVQSRRGSSGSPRT) has biased composition (polar residues). The interval 1114 to 1159 (LVQSRRGSSGSPRTVRSHARPQRKAKTPPRQARPETPESDYDQLPD) is disordered. Residues 1128–1140 (VRSHARPQRKAKT) show a composition bias toward basic residues. The region spanning 1159–1236 (DLRDDVQQSI…AQVELLGRFT (78 aa)) is the Carrier 2 domain. At serine 1195 the chain carries O-(pantetheine 4'-phosphoryl)serine. Residues 1266–1683 (REQYAIVGMS…GSTAHVVLSA (418 aa)) form the Ketosynthase family 3 (KS3) domain. Catalysis depends on for beta-ketoacyl synthase activity residues cysteine 1429, histidine 1565, and asparagine 1608.

In the N-terminal section; belongs to the NRP synthetase family. Pantetheine 4'-phosphate serves as cofactor.

It catalyses the reaction acetoacetyl-CoA + L-isoleucine + ATP = tenuazonic acid + AMP + diphosphate + CoA + 2 H(+). Hybrid PKS-NRPS synthetase that mediates the biosynthesis of the toxin tenuazonic acid (TeA), an inhibitor of protein biosynthesis on ribosomes by suppressing the release of new protein. TAS1 alone is sufficient for TeA synthesis via the condensation of isoleucine (Ile) with acetoacetyl-CoA by the N-terminal NRPS module and subsequent cyclization conducted by the C-terminal KS domain. The sequence is that of Hybrid PKS-NRPS synthetase TAS1 from Botryobasidium botryosum (strain FD-172 SS1).